The chain runs to 114 residues: T cell receptor beta variable 25-1 (114 aa).

The N-terminal stretch at 1 to 21 is a signal peptide; the sequence is MTIRLLCYVGFYFLGAGLMEA. The 93-residue stretch at 22–114 folds into the Ig-like domain; that stretch reads DIYQTPRYLV…TSQYLCASSE (93 aa). Cysteine 42 and cysteine 110 are joined by a disulfide. N-linked (GlcNAc...) asparagine glycosylation occurs at asparagine 72.

In terms of assembly, alpha-beta TR is a heterodimer composed of an alpha and beta chain; disulfide-linked. The alpha-beta TR is associated with the transmembrane signaling CD3 coreceptor proteins to form the TR-CD3 (TcR or TCR). The assembly of alpha-beta TR heterodimers with CD3 occurs in the endoplasmic reticulum where a single alpha-beta TR heterodimer associates with one CD3D-CD3E heterodimer, one CD3G-CD3E heterodimer and one CD247 homodimer forming a stable octameric structure. CD3D-CD3E and CD3G-CD3E heterodimers preferentially associate with TR alpha and TR beta chains, respectively. The association of the CD247 homodimer is the last step of TcR assembly in the endoplasmic reticulum and is required for transport to the cell surface.

It localises to the cell membrane. Functionally, v region of the variable domain of T cell receptor (TR) beta chain that participates in the antigen recognition. Alpha-beta T cell receptors are antigen specific receptors which are essential to the immune response and are present on the cell surface of T lymphocytes. Recognize peptide-major histocompatibility (MH) (pMH) complexes that are displayed by antigen presenting cells (APC), a prerequisite for efficient T cell adaptive immunity against pathogens. Binding of alpha-beta TR to pMH complex initiates TR-CD3 clustering on the cell surface and intracellular activation of LCK that phosphorylates the ITAM motifs of CD3G, CD3D, CD3E and CD247 enabling the recruitment of ZAP70. In turn ZAP70 phosphorylates LAT, which recruits numerous signaling molecules to form the LAT signalosome. The LAT signalosome propagates signal branching to three major signaling pathways, the calcium, the mitogen-activated protein kinase (MAPK) kinase and the nuclear factor NF-kappa-B (NF-kB) pathways, leading to the mobilization of transcription factors that are critical for gene expression and essential for T cell growth and differentiation. The T cell repertoire is generated in the thymus, by V-(D)-J rearrangement. This repertoire is then shaped by intrathymic selection events to generate a peripheral T cell pool of self-MH restricted, non-autoaggressive T cells. Post-thymic interaction of alpha-beta TR with the pMH complexes shapes TR structural and functional avidity. The chain is T cell receptor beta variable 25-1 from Homo sapiens (Human).